We begin with the raw amino-acid sequence, 445 residues long: Gastrula zinc finger protein 5-1 (445 aa).

The segment at 1-38 (MLQIKTEKEELDCGDDQNPKESSAVPLTDGASPEPQPQ) is disordered. Serine 89 is modified (phosphoserine; by CK2). The segment at 185 to 210 (FICCKCGDSFAHHSDLHTHLYACAGH) adopts a C2H2-type 1; atypical zinc-finger fold. 7 C2H2-type zinc fingers span residues 239–261 (FKCTVCGKCFTLKNSLQLHHRIH), 267–289 (FTCTECGKSFAQSCSLQLHSRTH), 295–317 (YVCTECGKRFSSNSGLRRHMRTH), 323–345 (YACKECGKFFSDLSTLHRHQNSH), 351–373 (FICTECGKGFTLKDSLHRHQRTH), 379–401 (FICSQCGKSYSQSSNLIKHQMIH), and 407–429 (FSCSECGKCFAVKDGLRNHQRVH).

Its function is as follows. Binds to RNA homomers. This is Gastrula zinc finger protein 5-1 from Xenopus laevis (African clawed frog).